The chain runs to 308 residues: Glutamyl-Q tRNA(Asp) synthetase (308 aa).

L-glutamate is bound by residues 19-23 and glutamate 55; that span reads RFAPS. A 'HIGH' region motif is present at residues 22 to 32; sequence PSPSGELHFGS. Residues cysteine 111, cysteine 113, tyrosine 125, and cysteine 129 each coordinate Zn(2+). Tyrosine 182 and arginine 200 together coordinate L-glutamate. The 'KMSKS' region motif lies at 238–242; that stretch reads KLSKQ. Lysine 241 is an ATP binding site.

The protein belongs to the class-I aminoacyl-tRNA synthetase family. GluQ subfamily. Requires Zn(2+) as cofactor.

Catalyzes the tRNA-independent activation of glutamate in presence of ATP and the subsequent transfer of glutamate onto a tRNA(Asp). Glutamate is transferred on the 2-amino-5-(4,5-dihydroxy-2-cyclopenten-1-yl) moiety of the queuosine in the wobble position of the QUC anticodon. The sequence is that of Glutamyl-Q tRNA(Asp) synthetase from Escherichia coli O6:H1 (strain CFT073 / ATCC 700928 / UPEC).